We begin with the raw amino-acid sequence, 266 residues long: 3-methyl-2-oxobutanoate hydroxymethyltransferase (266 aa).

Mg(2+)-binding residues include Asp45 and Asp84. Residues 45-46 (DS), Asp84, and Lys112 contribute to the 3-methyl-2-oxobutanoate site. Residue Glu114 participates in Mg(2+) binding. Glu181 serves as the catalytic Proton acceptor.

Belongs to the PanB family. Homodecamer; pentamer of dimers. Mg(2+) is required as a cofactor.

The protein resides in the cytoplasm. It catalyses the reaction 3-methyl-2-oxobutanoate + (6R)-5,10-methylene-5,6,7,8-tetrahydrofolate + H2O = 2-dehydropantoate + (6S)-5,6,7,8-tetrahydrofolate. It functions in the pathway cofactor biosynthesis; (R)-pantothenate biosynthesis; (R)-pantoate from 3-methyl-2-oxobutanoate: step 1/2. Its function is as follows. Catalyzes the reversible reaction in which hydroxymethyl group from 5,10-methylenetetrahydrofolate is transferred onto alpha-ketoisovalerate to form ketopantoate. This is 3-methyl-2-oxobutanoate hydroxymethyltransferase from Pseudomonas fluorescens (strain SBW25).